We begin with the raw amino-acid sequence, 292 residues long: F-box protein SKIP28 (292 aa).

Residues 21–79 (LIVLPYLHSLFELLSMIRVSRSLRDAIRDETALWTKLVIEPPLSSRLTDDILSEFSSKS) form the F-box; degenerate domain.

In terms of assembly, part of a SCF (ASK-cullin-F-box) protein ligase complex. Interacts with SKP1A/ASK1 and CUL1.

Its pathway is protein modification; protein ubiquitination. Functionally, component of SCF(ASK-cullin-F-box) E3 ubiquitin ligase complexes, which may mediate the ubiquitination and subsequent proteasomal degradation of target proteins. Required during the endosperm development in embryos. The protein is F-box protein SKIP28 (SKIP28) of Arabidopsis thaliana (Mouse-ear cress).